The primary structure comprises 123 residues: Small ribosomal subunit protein uS12 (123 aa).

The disordered stretch occupies residues 1–31; the sequence is MPTIQQLVRKGRHSKKAKVATAGLKGSPQRR. A compositionally biased stretch (basic residues) spans 9 to 18; it reads RKGRHSKKAK. 3-methylthioaspartic acid is present on Asp89.

The protein belongs to the universal ribosomal protein uS12 family. As to quaternary structure, part of the 30S ribosomal subunit. Contacts proteins S8 and S17. May interact with IF1 in the 30S initiation complex.

Its function is as follows. With S4 and S5 plays an important role in translational accuracy. In terms of biological role, interacts with and stabilizes bases of the 16S rRNA that are involved in tRNA selection in the A site and with the mRNA backbone. Located at the interface of the 30S and 50S subunits, it traverses the body of the 30S subunit contacting proteins on the other side and probably holding the rRNA structure together. The combined cluster of proteins S8, S12 and S17 appears to hold together the shoulder and platform of the 30S subunit. In Corynebacterium aurimucosum (strain ATCC 700975 / DSM 44827 / CIP 107346 / CN-1) (Corynebacterium nigricans), this protein is Small ribosomal subunit protein uS12.